A 270-amino-acid polypeptide reads, in one-letter code: Interleukin-1 beta (270 aa).

Residues 1–118 (MATVPEPTSE…VYDDDAFVCD (118 aa)) constitute a propeptide that is removed on maturation.

Belongs to the IL-1 family. Monomer. In its precursor form, weakly interacts with full-length MEFV; the mature cytokine does not interact at all. Interacts with integrins ITGAV:ITGBV and ITGA5:ITGB1; integrin-binding is required for IL1B signaling. Interacts with cargo receptor TMED10; the interaction is direct and is required for the secretion of IL1B mature form. Interacts with HSP90AB1; the interaction facilitates cargo translocation into the ERGIC. Interacts with HSP90B1; the interaction facilitates cargo translocation into the ERGIC.

It is found in the cytoplasm. The protein resides in the cytosol. It localises to the secreted. Its subcellular location is the lysosome. The protein localises to the extracellular exosome. Its function is as follows. Potent pro-inflammatory cytokine. Initially discovered as the major endogenous pyrogen, induces prostaglandin synthesis, neutrophil influx and activation, T-cell activation and cytokine production, B-cell activation and antibody production, and fibroblast proliferation and collagen production. Promotes Th17 differentiation of T-cells. Synergizes with IL12/interleukin-12 to induce IFNG synthesis from T-helper 1 (Th1) cells. Plays a role in angiogenesis by inducing VEGF production synergistically with TNF and IL6. Involved in transduction of inflammation downstream of pyroptosis: its mature form is specifically released in the extracellular milieu by passing through the gasdermin-D (GSDMD) pore. This chain is Interleukin-1 beta (IL1B), found in Eumetopias jubatus (Steller sea lion).